Reading from the N-terminus, the 269-residue chain is Aegyptin-like protein (269 aa).

The N-terminal stretch at 1–19 (MKLLLLLASVLCLALIVSA) is a signal peptide. Residues 19–152 (ARPSDETTDQ…GGAEGGEESP (134 aa)) form a disordered region. The tract at residues 38–148 (TSDSYHQEED…AGEEGGAEGG (111 aa)) is GE-rich region which mediates binding of Ca(2+). Acidic residues-rich tracts occupy residues 56-73 (GTED…ESSS), 98-121 (GEED…EGGA), and 131-149 (GGAD…EGGE). Positions 148 to 269 (GEESPVNTYH…DCIVEKRDSE (122 aa)) are mediates binding of host collagen and inhibition of platelet aggregation. 2 disulfides stabilise this stretch: Cys208-Cys261 and Cys230-Cys239.

This sequence belongs to the aegyptin family. In terms of tissue distribution, female saliva (at protein level). Distal lateral lobes of female salivary gland (at protein level). Low-level expression in male salivary gland. Not detected in female and male carcasses.

It is found in the secreted. In terms of biological role, modulates blood feeding of female mosquitoes on vertebrate hosts. Inhibits collagen-induced platelet aggregation in the host via preventing collagen interaction with its ligands: glycoprotein VI and integrin alpha-2/beta-1 (ITGA2/ITGB1). Inhibits collagen-induced increase of Ca(2+) levels in host platelets. Binds to host collagens. Binds Ca(2+). Prevents a decrease in platelet count in the host blood after collagen injection. Functionally, (Microbial infection) Does not affect the development of Plasmodium berghei parasites in mosquitoes. In Anopheles stephensi (Indo-Pakistan malaria mosquito), this protein is Aegyptin-like protein.